A 427-amino-acid chain; its full sequence is tRNA(Ile)-lysidine synthase (427 aa).

18-23 (SGGLDS) serves as a coordination point for ATP.

It belongs to the tRNA(Ile)-lysidine synthase family.

It is found in the cytoplasm. The catalysed reaction is cytidine(34) in tRNA(Ile2) + L-lysine + ATP = lysidine(34) in tRNA(Ile2) + AMP + diphosphate + H(+). In terms of biological role, ligates lysine onto the cytidine present at position 34 of the AUA codon-specific tRNA(Ile) that contains the anticodon CAU, in an ATP-dependent manner. Cytidine is converted to lysidine, thus changing the amino acid specificity of the tRNA from methionine to isoleucine. This is tRNA(Ile)-lysidine synthase from Pseudomonas putida (strain ATCC 47054 / DSM 6125 / CFBP 8728 / NCIMB 11950 / KT2440).